Consider the following 275-residue polypeptide: 4-diphosphocytidyl-2-C-methyl-D-erythritol kinase (275 aa).

Residue Lys15 is part of the active site. Pro97 to Ser107 serves as a coordination point for ATP. Asp137 is an active-site residue.

Belongs to the GHMP kinase family. IspE subfamily.

The enzyme catalyses 4-CDP-2-C-methyl-D-erythritol + ATP = 4-CDP-2-C-methyl-D-erythritol 2-phosphate + ADP + H(+). Its pathway is isoprenoid biosynthesis; isopentenyl diphosphate biosynthesis via DXP pathway; isopentenyl diphosphate from 1-deoxy-D-xylulose 5-phosphate: step 3/6. Functionally, catalyzes the phosphorylation of the position 2 hydroxy group of 4-diphosphocytidyl-2C-methyl-D-erythritol. This Pseudothermotoga lettingae (strain ATCC BAA-301 / DSM 14385 / NBRC 107922 / TMO) (Thermotoga lettingae) protein is 4-diphosphocytidyl-2-C-methyl-D-erythritol kinase.